Here is a 132-residue protein sequence, read N- to C-terminus: Fatty acid-binding protein 2 (132 aa).

Ser-2 carries the post-translational modification N-acetylserine. Hexadecanoate contacts are provided by residues Gln-40 and 128–130 (RYY).

Belongs to the calycin superfamily. Fatty-acid binding protein (FABP) family. As to quaternary structure, monomer. In terms of tissue distribution, midgut.

It is found in the cytoplasm. Its function is as follows. Binds fatty acids in a 1:1 molar ratio. This Manduca sexta (Tobacco hawkmoth) protein is Fatty acid-binding protein 2 (MFB2).